The following is a 643-amino-acid chain: 1-deoxy-D-xylulose-5-phosphate synthase (643 aa).

Thiamine diphosphate contacts are provided by residues His72 and 113–115 (GHA). Asp144 lines the Mg(2+) pocket. Thiamine diphosphate contacts are provided by residues 145-146 (GA), Asn174, Tyr287, and Glu370. Residue Asn174 participates in Mg(2+) binding.

Belongs to the transketolase family. DXPS subfamily. In terms of assembly, homodimer. Mg(2+) is required as a cofactor. The cofactor is thiamine diphosphate.

It carries out the reaction D-glyceraldehyde 3-phosphate + pyruvate + H(+) = 1-deoxy-D-xylulose 5-phosphate + CO2. It functions in the pathway metabolic intermediate biosynthesis; 1-deoxy-D-xylulose 5-phosphate biosynthesis; 1-deoxy-D-xylulose 5-phosphate from D-glyceraldehyde 3-phosphate and pyruvate: step 1/1. In terms of biological role, catalyzes the acyloin condensation reaction between C atoms 2 and 3 of pyruvate and glyceraldehyde 3-phosphate to yield 1-deoxy-D-xylulose-5-phosphate (DXP). This chain is 1-deoxy-D-xylulose-5-phosphate synthase, found in Synechococcus sp. (strain CC9605).